The following is a 1770-amino-acid chain: Transposon Ty2-F Gag-Pol polyprotein (1770 aa).

Composition is skewed to polar residues over residues 1–11, 19–39, and 49–60; these read MESQQLHQNPH, ASVT…SASN, and KVNSQQETTPGT. Disordered regions lie at residues 1-86 and 359-453; these read MESQ…GQYQ and QHSE…LPDH. Residues 295–397 are RNA-binding; sequence ENNINVSDRL…SSKPRAAKAH (103 aa). Residues 369 to 381 show a composition bias toward low complexity; sequence TSPNTTNTKVTTR. 2 stretches are compositionally biased toward polar residues: residues 399 to 408 and 415 to 435; these read IATSSKFSRV and ESTV…GQQQ. Catalysis depends on aspartate 457, which acts as the For protease activity; shared with dimeric partner. The segment at 579–636 is integrase-type zinc finger-like; that stretch reads NVNKSKSVNKYPYPLIHRMLGHANFRSIQKSLKKNAVTYLKESDIEWSNASTYQCPDC. In terms of domain architecture, Integrase catalytic spans 656–831; that stretch reads ESYEPFQYLH…AGLDITTILP (176 aa). Positions 667 and 732 each coordinate Mg(2+). Disordered stretches follow at residues 1004 to 1034, 1059 to 1135, 1146 to 1165, and 1170 to 1205; these read MGGT…STNE, TEEP…KSSK, LPLP…VSKD, and HSRQ…TEIE. 2 stretches are compositionally biased toward polar residues: residues 1009–1034 and 1065–1082; these read ESDT…STNE and QRNS…STPS. The segment covering 1151–1165 has biased composition (basic and acidic residues); that stretch reads LTHKSPTDTSDVSKD. The Bipartite nuclear localization signal motif lies at 1193 to 1227; the sequence is KKRSLEDNETEIEVSRDTWNNKNMRSLEPPRSKKR. Residues 1353–1491 form the Reverse transcriptase Ty1/copia-type domain; the sequence is NDYYITQLDI…DILGLEIKYQ (139 aa). The Mg(2+) site is built by aspartate 1361, aspartate 1442, aspartate 1443, aspartate 1625, glutamate 1667, and aspartate 1700. One can recognise an RNase H Ty1/copia-type domain in the interval 1625–1767; that stretch reads DASYGNQPYY…IKTFKLLTNK (143 aa).

As to quaternary structure, the capsid protein forms a homotrimer, from which the VLPs are assembled. The protease is a homodimer, whose active site consists of two apposed aspartic acid residues. In terms of processing, initially, virus-like particles (VLPs) are composed of the structural unprocessed proteins Gag and Gag-Pol, and also contain the host initiator methionine tRNA (tRNA(i)-Met) which serves as a primer for minus-strand DNA synthesis, and a dimer of genomic Ty RNA. Processing of the polyproteins occurs within the particle and proceeds by an ordered pathway, called maturation. First, the protease (PR) is released by autocatalytic cleavage of the Gag-Pol polyprotein, and this cleavage is a prerequisite for subsequent processing at the remaining sites to release the mature structural and catalytic proteins. Maturation takes place prior to the RT reaction and is required to produce transposition-competent VLPs.

The protein localises to the cytoplasm. Its subcellular location is the nucleus. It carries out the reaction DNA(n) + a 2'-deoxyribonucleoside 5'-triphosphate = DNA(n+1) + diphosphate. It catalyses the reaction Endonucleolytic cleavage to 5'-phosphomonoester.. Capsid protein (CA) is the structural component of the virus-like particle (VLP), forming the shell that encapsulates the retrotransposons dimeric RNA genome. The particles are assembled from trimer-clustered units and there are holes in the capsid shells that allow for the diffusion of macromolecules. CA also has nucleocapsid-like chaperone activity, promoting primer tRNA(i)-Met annealing to the multipartite primer-binding site (PBS), dimerization of Ty2 RNA and initiation of reverse transcription. In terms of biological role, the aspartyl protease (PR) mediates the proteolytic cleavages of the Gag and Gag-Pol polyproteins after assembly of the VLP. Its function is as follows. Reverse transcriptase/ribonuclease H (RT) is a multifunctional enzyme that catalyzes the conversion of the retro-elements RNA genome into dsDNA within the VLP. The enzyme displays a DNA polymerase activity that can copy either DNA or RNA templates, and a ribonuclease H (RNase H) activity that cleaves the RNA strand of RNA-DNA heteroduplexes during plus-strand synthesis and hydrolyzes RNA primers. The conversion leads to a linear dsDNA copy of the retrotransposon that includes long terminal repeats (LTRs) at both ends. Functionally, integrase (IN) targets the VLP to the nucleus, where a subparticle preintegration complex (PIC) containing at least integrase and the newly synthesized dsDNA copy of the retrotransposon must transit the nuclear membrane. Once in the nucleus, integrase performs the integration of the dsDNA into the host genome. In Saccharomyces cerevisiae (strain ATCC 204508 / S288c) (Baker's yeast), this protein is Transposon Ty2-F Gag-Pol polyprotein (TY2B-F).